The following is a 412-amino-acid chain: Multifunctional CCA protein (412 aa).

Positions 8 and 11 each coordinate ATP. Positions 8 and 11 each coordinate CTP. Mg(2+) is bound by residues Asp-21 and Asp-23. The ATP site is built by Arg-91, Arg-137, and Arg-140. Arg-91, Arg-137, and Arg-140 together coordinate CTP. Residues 228-329 (TGIHTLMTLS…VKLFDSIDAW (102 aa)) form the HD domain.

This sequence belongs to the tRNA nucleotidyltransferase/poly(A) polymerase family. Bacterial CCA-adding enzyme type 1 subfamily. Monomer. Can also form homodimers and oligomers. The cofactor is Mg(2+). It depends on Ni(2+) as a cofactor.

It carries out the reaction a tRNA precursor + 2 CTP + ATP = a tRNA with a 3' CCA end + 3 diphosphate. The enzyme catalyses a tRNA with a 3' CCA end + 2 CTP + ATP = a tRNA with a 3' CCACCA end + 3 diphosphate. Functionally, catalyzes the addition and repair of the essential 3'-terminal CCA sequence in tRNAs without using a nucleic acid template. Adds these three nucleotides in the order of C, C, and A to the tRNA nucleotide-73, using CTP and ATP as substrates and producing inorganic pyrophosphate. tRNA 3'-terminal CCA addition is required both for tRNA processing and repair. Also involved in tRNA surveillance by mediating tandem CCA addition to generate a CCACCA at the 3' terminus of unstable tRNAs. While stable tRNAs receive only 3'-terminal CCA, unstable tRNAs are marked with CCACCA and rapidly degraded. The chain is Multifunctional CCA protein from Escherichia coli (strain SE11).